The chain runs to 701 residues: Polyribonucleotide nucleotidyltransferase (701 aa).

Mg(2+) is bound by residues Asp-485 and Asp-491. Residues 552 to 611 form the KH domain; that stretch reads PKIFKTTVDPEKIRDIIGPGGKMINKIIAKTNVKIDIEPDGRIFVAAPDDISGNRAISMI. Positions 621-689 constitute an S1 motif domain; that stretch reads GQFFLGKVTR…RLGRIALSRK (69 aa).

Belongs to the polyribonucleotide nucleotidyltransferase family. It depends on Mg(2+) as a cofactor.

The protein resides in the cytoplasm. It catalyses the reaction RNA(n+1) + phosphate = RNA(n) + a ribonucleoside 5'-diphosphate. Involved in mRNA degradation. Catalyzes the phosphorolysis of single-stranded polyribonucleotides processively in the 3'- to 5'-direction. This is Polyribonucleotide nucleotidyltransferase from Caldicellulosiruptor saccharolyticus (strain ATCC 43494 / DSM 8903 / Tp8T 6331).